Consider the following 364-residue polypeptide: N-acetyl-gamma-glutamyl-phosphate reductase (364 aa).

Cys-157 is an active-site residue.

The protein belongs to the NAGSA dehydrogenase family. Type 1 subfamily.

The protein localises to the cytoplasm. It carries out the reaction N-acetyl-L-glutamate 5-semialdehyde + phosphate + NADP(+) = N-acetyl-L-glutamyl 5-phosphate + NADPH + H(+). It functions in the pathway amino-acid biosynthesis; L-arginine biosynthesis; N(2)-acetyl-L-ornithine from L-glutamate: step 3/4. Functionally, catalyzes the NADPH-dependent reduction of N-acetyl-5-glutamyl phosphate to yield N-acetyl-L-glutamate 5-semialdehyde. This is N-acetyl-gamma-glutamyl-phosphate reductase from Bifidobacterium animalis subsp. lactis (strain AD011).